The chain runs to 523 residues: 2-isopropylmalate synthase (523 aa).

Residues 5–267 enclose the Pyruvate carboxyltransferase domain; sequence VIIFDTTLRD…ETGINAKEIH (263 aa). Residues D14, H202, H204, and N238 each coordinate Mn(2+). The tract at residues 392–523 is regulatory domain; the sequence is QLKQLVVHSD…QQKARSLGGV (132 aa).

Belongs to the alpha-IPM synthase/homocitrate synthase family. LeuA type 1 subfamily. As to quaternary structure, homodimer. Mn(2+) is required as a cofactor.

It localises to the cytoplasm. It carries out the reaction 3-methyl-2-oxobutanoate + acetyl-CoA + H2O = (2S)-2-isopropylmalate + CoA + H(+). Its pathway is amino-acid biosynthesis; L-leucine biosynthesis; L-leucine from 3-methyl-2-oxobutanoate: step 1/4. Catalyzes the condensation of the acetyl group of acetyl-CoA with 3-methyl-2-oxobutanoate (2-ketoisovalerate) to form 3-carboxy-3-hydroxy-4-methylpentanoate (2-isopropylmalate). The protein is 2-isopropylmalate synthase of Shewanella woodyi (strain ATCC 51908 / MS32).